The sequence spans 394 residues: WAT1-related protein At2g40900 (394 aa).

10 consecutive transmembrane segments (helical) span residues 13 to 33, 40 to 60, 67 to 87, 102 to 122, 142 to 162, 180 to 200, 209 to 229, 245 to 265, 273 to 293, and 298 to 318; these read FAMVCLQFGYAGMNLVTKTVL, YVLVAYRNAFATAAIAPFALL, SKMTFPIFMRIFLLALLGPVI, TFSSAVSNIVPAITIILATLF, LVTVVGSILMIFYKGPFINFF, AAVFLLLASLSWASFFVLQAA, LSMSTMVCFMGTLQSLALAFV, LLASAYAGIMSSSIAYYVQGL, VFVTAFNPLIVVIVSIMSFFV, and IYLGGVIGVVVLMVGVYAVLW. 2 EamA domains span residues 22-147 and 189-317; these read YAGM…TVVG and LSWA…YAVL.

Belongs to the drug/metabolite transporter (DMT) superfamily. Plant drug/metabolite exporter (P-DME) (TC 2.A.7.4) family.

Its subcellular location is the membrane. The protein is WAT1-related protein At2g40900 of Arabidopsis thaliana (Mouse-ear cress).